The chain runs to 379 residues: UDP-4-amino-4-deoxy-L-arabinose--oxoglutarate aminotransferase (379 aa).

Lysine 182 is subject to N6-(pyridoxal phosphate)lysine.

Belongs to the DegT/DnrJ/EryC1 family. ArnB subfamily. Homodimer. It depends on pyridoxal 5'-phosphate as a cofactor.

The catalysed reaction is UDP-4-amino-4-deoxy-beta-L-arabinose + 2-oxoglutarate = UDP-beta-L-threo-pentopyranos-4-ulose + L-glutamate. It functions in the pathway nucleotide-sugar biosynthesis; UDP-4-deoxy-4-formamido-beta-L-arabinose biosynthesis; UDP-4-deoxy-4-formamido-beta-L-arabinose from UDP-alpha-D-glucuronate: step 2/3. It participates in bacterial outer membrane biogenesis; lipopolysaccharide biosynthesis. In terms of biological role, catalyzes the conversion of UDP-4-keto-arabinose (UDP-Ara4O) to UDP-4-amino-4-deoxy-L-arabinose (UDP-L-Ara4N). The modified arabinose is attached to lipid A and is required for resistance to polymyxin and cationic antimicrobial peptides. In Salmonella paratyphi A (strain ATCC 9150 / SARB42), this protein is UDP-4-amino-4-deoxy-L-arabinose--oxoglutarate aminotransferase.